The following is a 56-amino-acid chain: uncharacterized protein (56 aa).

This is an uncharacterized protein from Haemophilus influenzae (strain ATCC 51907 / DSM 11121 / KW20 / Rd).